The sequence spans 266 residues: MENQEVVNQLAGFEVKVSGQPLSKLPEDLYIPPDALRVFLEAFEGPLDLLLYLIKKHNIDILDIPIAEITRQYMQFVDLMREMRIELAAEYLVMAAMLAEIKSRLLLPRPVVEEENEQDPRAELVRRLQEYERYKKAAYDLDQLPRVGRDTFIADAAVPPMNTAKIHPTAELPELLNALKDVLQRASLYNAHSIAREPLSIRERMSRILSLVDKENFIAFTRLFTVEEGRMGVVVTLIATLELIRQSVIELVQAEPFALIHIRAKG.

The protein belongs to the ScpA family. Component of a cohesin-like complex composed of ScpA, ScpB and the Smc homodimer, in which ScpA and ScpB bind to the head domain of Smc. The presence of the three proteins is required for the association of the complex with DNA.

The protein resides in the cytoplasm. Participates in chromosomal partition during cell division. May act via the formation of a condensin-like complex containing Smc and ScpB that pull DNA away from mid-cell into both cell halves. The chain is Segregation and condensation protein A from Coxiella burnetii (strain RSA 493 / Nine Mile phase I).